Consider the following 207-residue polypeptide: Large ribosomal subunit protein bL25 (207 aa).

This sequence belongs to the bacterial ribosomal protein bL25 family. CTC subfamily. Part of the 50S ribosomal subunit; part of the 5S rRNA/L5/L18/L25 subcomplex. Contacts the 5S rRNA. Binds to the 5S rRNA independently of L5 and L18.

In terms of biological role, this is one of the proteins that binds to the 5S RNA in the ribosome where it forms part of the central protuberance. The polypeptide is Large ribosomal subunit protein bL25 (Dictyoglomus thermophilum (strain ATCC 35947 / DSM 3960 / H-6-12)).